Reading from the N-terminus, the 473-residue chain is H(+)/Cl(-) exchange transporter ClcA (473 aa).

The Cytoplasmic segment spans residues Met-1–Pro-32. A helical membrane pass occupies residues Leu-33–Val-69. At Gln-70 to Phe-76 the chain is on the periplasmic side. A helical transmembrane segment spans residues Leu-77 to Phe-100. Residues Gly-106–Pro-110 carry the Selectivity filter part_1 motif. Position 107 (Ser-107) interacts with chloride. Positions Ile-109–Leu-116 form an intramembrane region, helical. Residues Glu-117–Arg-123 are Cytoplasmic-facing. Helical transmembrane passes span Trp-124–Ala-141 and Glu-148–Phe-166. Positions Gly-146–Pro-150 match the Selectivity filter part_2 motif. The Cytoplasmic segment spans residues Arg-167 to Thr-176. 2 intramembrane regions (helical) span residues Leu-177–Ala-189 and Pro-193–Ile-201. Residues Glu-202–Ser-214 lie on the Cytoplasmic side of the membrane. A helical transmembrane segment spans residues Ile-215 to Phe-232. The Periplasmic segment spans residues Asn-233–Leu-252. The chain crosses the membrane as a helical span at residues Trp-253–Gln-281. The Cytoplasmic portion of the chain corresponds to Arg-282 to Glu-287. The chain crosses the membrane as a helical span at residues Ile-288 to Glu-309. Residues Pro-310–Ser-329 are Periplasmic-facing. 2 helical membrane-spanning segments follow: residues Val-330–Ser-349 and Gly-355–Ala-376. Positions Gly-355–Pro-359 match the Selectivity filter part_3 motif. 2 residues coordinate chloride: Ile-356 and Phe-357. Residues Val-377 to Ala-386 lie on the Periplasmic side of the membrane. An intramembrane region (helical) is located at residues Gly-387 to Ser-401. The segment at residues Val-402 to Ala-404 is an intramembrane region (note=Loop between two helices). Residues Pro-405–Thr-416 constitute an intramembrane region (helical). The segment at residues Asp-417–Leu-421 is an intramembrane region (note=Loop between two helices). Residues Ile-422–Phe-438 form a helical membrane-spanning segment. Over Leu-439–Thr-473 the chain is Cytoplasmic. Residue Tyr-445 participates in chloride binding.

Belongs to the chloride channel (TC 2.A.49) family. ClcA subfamily. In terms of assembly, homodimer.

It localises to the cell inner membrane. It carries out the reaction 2 chloride(in) + H(+)(out) = 2 chloride(out) + H(+)(in). Proton-coupled chloride transporter. Functions as antiport system and exchanges two chloride ions for 1 proton. Probably acts as an electrical shunt for an outwardly-directed proton pump that is linked to amino acid decarboxylation, as part of the extreme acid resistance (XAR) response. In Salmonella paratyphi A (strain AKU_12601), this protein is H(+)/Cl(-) exchange transporter ClcA.